Reading from the N-terminus, the 415-residue chain is uncharacterized protein (415 aa).

The TRAM domain maps to 1–52 (MQDLTINAIGAQGDGLARTADGKPAFVPLTLPGEVVRAKMDGARGEVVEILA). Residues cysteine 62, cysteine 68, cysteine 71, and cysteine 147 each contribute to the [4Fe-4S] cluster site. S-adenosyl-L-methionine contacts are provided by glutamine 252, tyrosine 279, glutamate 299, and aspartate 347. The active-site Nucleophile is cysteine 373.

It belongs to the class I-like SAM-binding methyltransferase superfamily. RNA M5U methyltransferase family.

This is an uncharacterized protein from Caulobacter vibrioides (strain ATCC 19089 / CIP 103742 / CB 15) (Caulobacter crescentus).